A 75-amino-acid chain; its full sequence is Cytochrome c oxidase subunit 6C (75 aa).

The Mitochondrial matrix segment spans residues 1 to 13; that stretch reads MASEVLVKPQMRG. Residues 14–54 form a helical membrane-spanning segment; that stretch reads LLARRLRIHMVGAFLVSLGVAALYKFGVAEPRKKAYADFYK. Residues 55–75 lie on the Mitochondrial intermembrane side of the membrane; it reads NYSAEKDFEEMKKAGLFRSIK.

The protein belongs to the cytochrome c oxidase subunit 6c family. As to quaternary structure, component of the cytochrome c oxidase (complex IV, CIV), a multisubunit enzyme composed of 14 subunits. The complex is composed of a catalytic core of 3 subunits MT-CO1, MT-CO2 and MT-CO3, encoded in the mitochondrial DNA, and 11 supernumerary subunits COX4I, COX5A, COX5B, COX6A, COX6B, COX6C, COX7A, COX7B, COX7C, COX8 and NDUFA4, which are encoded in the nuclear genome. The complex exists as a monomer or a dimer and forms supercomplexes (SCs) in the inner mitochondrial membrane with NADH-ubiquinone oxidoreductase (complex I, CI) and ubiquinol-cytochrome c oxidoreductase (cytochrome b-c1 complex, complex III, CIII), resulting in different assemblies (supercomplex SCI(1)III(2)IV(1) and megacomplex MCI(2)III(2)IV(2)).

The protein resides in the mitochondrion inner membrane. Its pathway is energy metabolism; oxidative phosphorylation. Its function is as follows. Component of the cytochrome c oxidase, the last enzyme in the mitochondrial electron transport chain which drives oxidative phosphorylation. The respiratory chain contains 3 multisubunit complexes succinate dehydrogenase (complex II, CII), ubiquinol-cytochrome c oxidoreductase (cytochrome b-c1 complex, complex III, CIII) and cytochrome c oxidase (complex IV, CIV), that cooperate to transfer electrons derived from NADH and succinate to molecular oxygen, creating an electrochemical gradient over the inner membrane that drives transmembrane transport and the ATP synthase. Cytochrome c oxidase is the component of the respiratory chain that catalyzes the reduction of oxygen to water. Electrons originating from reduced cytochrome c in the intermembrane space (IMS) are transferred via the dinuclear copper A center (CU(A)) of subunit 2 and heme A of subunit 1 to the active site in subunit 1, a binuclear center (BNC) formed by heme A3 and copper B (CU(B)). The BNC reduces molecular oxygen to 2 water molecules using 4 electrons from cytochrome c in the IMS and 4 protons from the mitochondrial matrix. The chain is Cytochrome c oxidase subunit 6C (COX6C) from Plecturocebus donacophilus (Bolivian gray titi monkey).